The chain runs to 357 residues: Isopentenyl-diphosphate delta-isomerase (357 aa).

13-14 is a binding site for substrate; the sequence is RK. FMN-binding positions include S71, 72-74, S102, and N131; that span reads SMT. 102 to 104 lines the substrate pocket; that stretch reads SMR. Position 166 (Q166) interacts with substrate. E167 provides a ligand contact to Mg(2+). Residues K198 and 311–312 each bind FMN; that span reads AR.

Belongs to the IPP isomerase type 2 family. In terms of assembly, homooctamer. Dimer of tetramers. Requires FMN as cofactor. NADPH is required as a cofactor. The cofactor is Mg(2+).

Its subcellular location is the cytoplasm. The catalysed reaction is isopentenyl diphosphate = dimethylallyl diphosphate. In terms of biological role, involved in the biosynthesis of isoprenoids. Catalyzes the 1,3-allylic rearrangement of the homoallylic substrate isopentenyl (IPP) to its allylic isomer, dimethylallyl diphosphate (DMAPP). This chain is Isopentenyl-diphosphate delta-isomerase, found in Chlorobium chlorochromatii (strain CaD3).